The sequence spans 484 residues: Probable efflux pump outer membrane protein TtgC (484 aa).

An N-terminal signal peptide occupies residues 1–17 (MTKSLLSLAVTAFILGG). Cysteine 18 carries the N-palmitoyl cysteine lipid modification. Cysteine 18 carries S-diacylglycerol cysteine lipidation.

It belongs to the outer membrane factor (OMF) (TC 1.B.17) family.

The protein resides in the cell outer membrane. In terms of biological role, probable outer membrane component of the TtgABC efflux pump with unknown specificity. This chain is Probable efflux pump outer membrane protein TtgC (ttgC), found in Pseudomonas putida (strain ATCC 47054 / DSM 6125 / CFBP 8728 / NCIMB 11950 / KT2440).